A 257-amino-acid polypeptide reads, in one-letter code: UPF0246 protein Shal_1126 (257 aa).

This sequence belongs to the UPF0246 family.

In Shewanella halifaxensis (strain HAW-EB4), this protein is UPF0246 protein Shal_1126.